The primary structure comprises 98 residues: Protein FAM24A (98 aa).

The N-terminal stretch at methionine 1–cysteine 29 is a signal peptide.

The protein belongs to the FAM24 family.

It localises to the secreted. The chain is Protein FAM24A (Fam24a) from Mus musculus (Mouse).